A 353-amino-acid polypeptide reads, in one-letter code: Photosystem II D2 protein (353 aa).

Position 2 is an N-acetylthreonine (T2). At T2 the chain carries Phosphothreonine. A helical transmembrane segment spans residues 41–61; that stretch reads CAYFALGGWFTGTTFVTSWYT. H118 contributes to the chlorophyll a binding site. A helical membrane pass occupies residues 125–141; the sequence is GFMLRQFELARSVQLRP. The pheophytin a site is built by Q130 and N143. The helical transmembrane segment at 153–166 threads the bilayer; that stretch reads VFVSVFLIYPLGQS. H198 contacts chlorophyll a. The helical transmembrane segment at 208 to 228 threads the bilayer; that stretch reads AALLCAIHGATVENTLFEDGD. Residues H215 and F262 each coordinate a plastoquinone. Residue H215 coordinates Fe cation. H269 is a binding site for Fe cation. The helical transmembrane segment at 279–295 threads the bilayer; the sequence is GLWMSAIGVVGLALNLR.

This sequence belongs to the reaction center PufL/M/PsbA/D family. PSII is composed of 1 copy each of membrane proteins PsbA, PsbB, PsbC, PsbD, PsbE, PsbF, PsbH, PsbI, PsbJ, PsbK, PsbL, PsbM, PsbT, PsbX, PsbY, PsbZ, Psb30/Ycf12, at least 3 peripheral proteins of the oxygen-evolving complex and a large number of cofactors. It forms dimeric complexes. The cofactor is The D1/D2 heterodimer binds P680, chlorophylls that are the primary electron donor of PSII, and subsequent electron acceptors. It shares a non-heme iron and each subunit binds pheophytin, quinone, additional chlorophylls, carotenoids and lipids. There is also a Cl(-1) ion associated with D1 and D2, which is required for oxygen evolution. The PSII complex binds additional chlorophylls, carotenoids and specific lipids..

Its subcellular location is the plastid. The protein localises to the chloroplast thylakoid membrane. It carries out the reaction 2 a plastoquinone + 4 hnu + 2 H2O = 2 a plastoquinol + O2. In terms of biological role, photosystem II (PSII) is a light-driven water:plastoquinone oxidoreductase that uses light energy to abstract electrons from H(2)O, generating O(2) and a proton gradient subsequently used for ATP formation. It consists of a core antenna complex that captures photons, and an electron transfer chain that converts photonic excitation into a charge separation. The D1/D2 (PsbA/PsbD) reaction center heterodimer binds P680, the primary electron donor of PSII as well as several subsequent electron acceptors. D2 is needed for assembly of a stable PSII complex. The chain is Photosystem II D2 protein from Drimys granadensis.